The sequence spans 182 residues: Probable peptidyl-prolyl cis-trans isomerase A (182 aa).

One can recognise a PPIase cyclophilin-type domain in the interval 13-181; sequence QNATATLHTN…EPVVIDSITI (169 aa). Residues 161–182 form a disordered region; it reads TTATDGNDRPTEPVVIDSITIS.

This sequence belongs to the cyclophilin-type PPIase family.

The protein resides in the cytoplasm. It catalyses the reaction [protein]-peptidylproline (omega=180) = [protein]-peptidylproline (omega=0). Its function is as follows. PPIases accelerate the folding of proteins. It catalyzes the cis-trans isomerization of proline imidic peptide bonds in oligopeptides. This chain is Probable peptidyl-prolyl cis-trans isomerase A (ppiA), found in Mycobacterium leprae (strain TN).